A 194-amino-acid polypeptide reads, in one-letter code: Xanthine phosphoribosyltransferase (194 aa).

Positions 20 and 27 each coordinate xanthine. A 5-phospho-alpha-D-ribose 1-diphosphate-binding site is contributed by 128-132 (ANGQA). Residue Lys-156 participates in xanthine binding.

It belongs to the purine/pyrimidine phosphoribosyltransferase family. Xpt subfamily. Homodimer.

It localises to the cytoplasm. The catalysed reaction is XMP + diphosphate = xanthine + 5-phospho-alpha-D-ribose 1-diphosphate. It functions in the pathway purine metabolism; XMP biosynthesis via salvage pathway; XMP from xanthine: step 1/1. In terms of biological role, converts the preformed base xanthine, a product of nucleic acid breakdown, to xanthosine 5'-monophosphate (XMP), so it can be reused for RNA or DNA synthesis. This Geobacillus thermodenitrificans (strain NG80-2) protein is Xanthine phosphoribosyltransferase.